Consider the following 197-residue polypeptide: uncharacterized protein (197 aa).

2 disordered regions span residues 1 to 30 and 115 to 174; these read MSDDLNDFFAKKDSTKKVVKKPTSTTPKVV and PSLK…KQEL. Positions 21–30 are enriched in low complexity; it reads KPTSTTPKVV. Acidic residues predominate over residues 123 to 137; it reads KVDEDDDQIYEDKEE. The segment covering 157–170 has biased composition (basic residues); it reads KSNKKVAPKQKKKS.

This is an uncharacterized protein from Dictyostelium discoideum (Social amoeba).